Here is a 206-residue protein sequence, read N- to C-terminus: Superoxide dismutase [Mn] (206 aa).

4 residues coordinate Mn(2+): His27, His82, Asp168, and His172.

Belongs to the iron/manganese superoxide dismutase family. Homodimer. Mn(2+) is required as a cofactor.

The enzyme catalyses 2 superoxide + 2 H(+) = H2O2 + O2. Its function is as follows. Destroys superoxide anion radicals which are normally produced within the cells and which are toxic to biological systems. This chain is Superoxide dismutase [Mn] (sodA), found in Escherichia coli O157:H7.